A 577-amino-acid chain; its full sequence is Arginine--tRNA ligase (577 aa).

Residues P122 to H132 carry the 'HIGH' region motif.

The protein belongs to the class-I aminoacyl-tRNA synthetase family. As to quaternary structure, monomer.

The protein localises to the cytoplasm. It carries out the reaction tRNA(Arg) + L-arginine + ATP = L-arginyl-tRNA(Arg) + AMP + diphosphate. The sequence is that of Arginine--tRNA ligase from Salmonella enteritidis PT4 (strain P125109).